The following is a 694-amino-acid chain: Rabphilin-3A (694 aa).

Positions 1-12 are enriched in polar residues; the sequence is MTDTVFSNSSNR. The disordered stretch occupies residues 1–51; it reads MTDTVFSNSSNRWMYPSDRPLQSNDKEQLQAGWSVHPGGQPDRQRKQEELT. A RabBD domain is found at 44-160; that stretch reads QRKQEELTDE…KRSGAWFFKG (117 aa). Residues 92-148 form an FYVE-type zinc finger; the sequence is GDGVNRCILCGEQLGMLGSACVVCEDCKKNVCTKCGVETNNRLHSVWLCKICIEQRE. Residues C98, C101, C115, C118, C123, C126, C140, and C143 each coordinate Zn(2+). Residues 166–388 are disordered; the sequence is LPQPMPIKKT…EEEANSYDSD (223 aa). The span at 177–186 shows a compositional bias: low complexity; the sequence is PQQPVSEPAA. A compositionally biased stretch (basic and acidic residues) spans 202–211; it reads ARGDSEDRRG. R226 carries the post-translational modification Omega-N-methylarginine. The residue at position 272 (S272) is a Phosphoserine. The span at 352-370 shows a compositional bias: low complexity; the sequence is PSGPYSQASAAAPQPAAAR. The segment covering 375–388 has biased composition (acidic residues); sequence PEEEEEEANSYDSD. In terms of domain architecture, C2 1 spans 392–514; that stretch reads TLGALEFSLL…KPNQRKNFNI (123 aa). The Ca(2+) site is built by M422, D423, D429, D484, E485, D486, E492, E539, D581, D587, D641, Y642, D643, and D649. The region spanning 550–683 is the C2 2 domain; that stretch reads ERGKILVSLM…NKDKKIERWH (134 aa). A phosphoserine mark is found at S692 and S693.

As to quaternary structure, interacts with RAB3B, RAB3C, RAB3D, RAB8A, RAB27A and RAB27B. Interacts with RAB3A; this interaction recruits RPH3A to synaptic vesicules. Interacts (via C2B domain) with SNAP25. Interacts with deubiquitinating enzyme CAND1; this interaction results in the deubiquitination of RPH3A. Interacts with GRIN2A and DLG4; this ternary complex regulates NMDA receptor composition at postsynaptic membranes. Interacts with SNCA. The cofactor is Ca(2+). In terms of processing, ubiquitinated. Deubiquitinated by CAND1 to prevent its degradation.

It localises to the cytoplasmic vesicle. The protein resides in the secretory vesicle. The protein localises to the synaptic vesicle membrane. It is found in the cell projection. Its subcellular location is the dendritic spine. It localises to the postsynaptic cell membrane. The protein resides in the membrane. Functionally, plays an essential role in docking and fusion steps of regulated exocytosis. At the presynaptic level, RPH3A is recruited by RAB3A to the synaptic vesicle membrane in a GTP-dependent manner where it modulates synaptic vesicle trafficking and calcium-triggered neurotransmitter release. In the post-synaptic compartment, forms a ternary complex with GRIN2A and DLG4 and regulates NMDA receptor stability. Also plays a role in the exocytosis of arginine vasopressin hormone. The protein is Rabphilin-3A (RPH3A) of Homo sapiens (Human).